A 393-amino-acid chain; its full sequence is Acetate kinase (393 aa).

N10 provides a ligand contact to Mg(2+). ATP is bound at residue K17. Position 89 (R89) interacts with substrate. D146 serves as the catalytic Proton donor/acceptor. Residues 204–208, 278–280, and 323–327 each bind ATP; these read HLGNG, DMR, and GVGEN. E376 serves as a coordination point for Mg(2+).

Belongs to the acetokinase family. As to quaternary structure, homodimer. Requires Mg(2+) as cofactor. Mn(2+) is required as a cofactor.

The protein resides in the cytoplasm. The catalysed reaction is acetate + ATP = acetyl phosphate + ADP. The protein operates within metabolic intermediate biosynthesis; acetyl-CoA biosynthesis; acetyl-CoA from acetate: step 1/2. Catalyzes the formation of acetyl phosphate from acetate and ATP. Can also catalyze the reverse reaction. This chain is Acetate kinase, found in Mycoplasma genitalium (strain ATCC 33530 / DSM 19775 / NCTC 10195 / G37) (Mycoplasmoides genitalium).